The chain runs to 4545 residues: Prolow-density lipoprotein receptor-related protein 1 (4545 aa).

The first 19 residues, 1-19 (MLTPPLLLLLPLLSALVAG), serve as a signal peptide directing secretion. Over 20–4424 (ATMDAPKTCS…SQQQPGHMTS (4405 aa)) the chain is Extracellular. LDL-receptor class A domains are found at residues 27–66 (TCSP…EICP) and 72–110 (RCPP…AHCR). Intrachain disulfides connect cysteine 28–cysteine 41, cysteine 35–cysteine 54, cysteine 48–cysteine 65, cysteine 73–cysteine 86, cysteine 80–cysteine 99, and cysteine 93–cysteine 109. 5 N-linked (GlcNAc...) asparagine glycosylation sites follow: asparagine 115, asparagine 137, asparagine 186, asparagine 240, and asparagine 275. LDL-receptor class B repeat units lie at residues 293–335 (GNFY…DPAM), 336–379 (GKVF…DLVS), and 380–423 (RLVY…FENY). N-linked (GlcNAc...) asparagine glycosylation occurs at asparagine 358. An N-linked (GlcNAc...) asparagine glycan is attached at asparagine 447. LDL-receptor class B repeat units lie at residues 572-614 (GFIY…DWMG), 615-660 (DNLY…DPLN), 661-711 (GWMY…DIPA), and 712-755 (GRLY…HGNY). The HAT 1 repeat unit spans residues 639–671 (TRKTLIEGKMTHPRAIVVDPLNGWMYWTDWEED). An N-linked (GlcNAc...) asparagine glycan is attached at asparagine 730. LDL-receptor class A domains follow at residues 854–892 (QCQP…ALCH), 895–933 (TCPS…ATCS), 936–973 (TCPP…ASCA), 976–1013 (TCFP…AGCS), 1015–1053 (SCSS…ANCT), 1062–1099 (GCHS…KGCE), 1104–1142 (VCDP…ENCE), and 1145–1184 (ACRP…ELCD). 24 disulfide bridges follow: cysteine 855/cysteine 867, cysteine 862/cysteine 880, cysteine 874/cysteine 891, cysteine 896/cysteine 908, cysteine 903/cysteine 921, cysteine 915/cysteine 932, cysteine 937/cysteine 949, cysteine 944/cysteine 962, cysteine 956/cysteine 972, cysteine 977/cysteine 990, cysteine 985/cysteine 1003, cysteine 997/cysteine 1012, cysteine 1016/cysteine 1028, cysteine 1023/cysteine 1041, cysteine 1035/cysteine 1052, cysteine 1063/cysteine 1076, cysteine 1070/cysteine 1089, cysteine 1083/cysteine 1098, cysteine 1105/cysteine 1119, cysteine 1113/cysteine 1132, cysteine 1126/cysteine 1141, cysteine 1146/cysteine 1160, cysteine 1153/cysteine 1173, and cysteine 1167/cysteine 1183. Ca(2+) contacts are provided by tryptophan 872, aspartate 875, aspartate 877, aspartate 879, aspartate 885, and glutamate 886. N-linked (GlcNAc...) asparagine glycosylation is present at asparagine 929. Residues tryptophan 1033, aspartate 1036, aspartate 1038, aspartate 1040, aspartate 1046, and glutamate 1047 each coordinate Ca(2+). An N-linked (GlcNAc...) asparagine glycan is attached at asparagine 1051. Ca(2+) contacts are provided by tryptophan 1081, aspartate 1084, aspartate 1086, aspartate 1088, aspartate 1094, and glutamate 1095. N-linked (GlcNAc...) asparagine glycosylation occurs at asparagine 1156. Residues asparagine 1196 and asparagine 1219 are each glycosylated (N-linked (GlcNAc...) asparagine). LDL-receptor class B repeat units follow at residues 1310 to 1356 (SALY…DWIA), 1357 to 1399 (GNIY…DPRD), 1400 to 1446 (GILF…DYLE), 1447 to 1491 (KRIL…YGGE), and 1492 to 1532 (VYWT…YHPS). HAT repeat units follow at residues 1380–1413 (TTLL…SLPR) and 1470–1503 (MEVL…NTLA). N-linked (GlcNAc...) asparagine glycosylation is found at asparagine 1512, asparagine 1559, asparagine 1576, asparagine 1617, and asparagine 1646. LDL-receptor class B repeat units lie at residues 1628–1670 (QRVY…DWVS), 1671–1714 (RNLF…HPLR), 1715–1754 (GKLY…DFPE), and 1755–1799 (SKLY…MGDK). Residues 1653 to 1684 (VVSADLPNAHGLAVDWVSRNLFWTSYDTNKKQ) form an HAT 4 repeat. 5 N-linked (GlcNAc...) asparagine glycosylation sites follow: asparagine 1724, asparagine 1734, asparagine 1764, asparagine 1826, and asparagine 1934. LDL-receptor class B repeat units follow at residues 1935–1977 (DTIY…DWIA), 1978–2020 (GNIY…HPEK), 2021–2064 (GYLF…DYQG), and 2065–2108 (GKLY…FEDF). Asparagine 1996 carries an N-linked (GlcNAc...) asparagine glycan. Lysine 2010 is subject to N6-acetyllysine. An N-linked (GlcNAc...) asparagine glycan is attached at asparagine 2049. Residues asparagine 2118 and asparagine 2128 are each glycosylated (N-linked (GlcNAc...) asparagine). LDL-receptor class B repeat units lie at residues 2254–2295 (NRIF…HRGW), 2296–2344 (DTLY…DECQ), 2345–2389 (NLMF…DHRA), 2390–2432 (EKLY…YGEH), and 2433–2474 (IFWT…VAND). 3 HAT repeats span residues 2277–2309 (TTIV…STIT), 2325–2358 (TVIT…LHPS), and 2411–2444 (HRYV…RAVQ). N-linked (GlcNAc...) asparagine glycans are attached at residues asparagine 2473, asparagine 2503, and asparagine 2522. 7 LDL-receptor class A domains span residues 2524–2563 (SCRA…SYCN), 2566–2602 (RCKK…IPCN), 2605–2641 (ACGV…MNCS), 2639–2690 (NCSA…RDCP), 2696–2732 (RCPL…THCN), 2734–2771 (FCSE…AHCE), and 2774–2814 (TCGP…AGCL). 6 disulfides stabilise this stretch: cysteine 2525/cysteine 2538, cysteine 2533/cysteine 2551, cysteine 2545/cysteine 2562, cysteine 2567/cysteine 2579, cysteine 2574/cysteine 2592, and cysteine 2586/cysteine 2601. A glycan (N-linked (GlcNAc...) asparagine) is linked at asparagine 2602. 15 disulfides stabilise this stretch: cysteine 2606/cysteine 2618, cysteine 2613/cysteine 2631, cysteine 2625/cysteine 2640, cysteine 2640/cysteine 2667, cysteine 2645/cysteine 2680, cysteine 2674/cysteine 2689, cysteine 2697/cysteine 2709, cysteine 2704/cysteine 2722, cysteine 2716/cysteine 2731, cysteine 2735/cysteine 2747, cysteine 2742/cysteine 2760, cysteine 2754/cysteine 2770, cysteine 2775/cysteine 2788, cysteine 2782/cysteine 2801, and cysteine 2795/cysteine 2813. N-linked (GlcNAc...) asparagine glycosylation is found at asparagine 2621 and asparagine 2639. A glycan (N-linked (GlcNAc...) asparagine) is linked at asparagine 2816. LDL-receptor class A domains are found at residues 2818-2855 (TCDD…PECE), 2858-2899 (TCGP…PHCT), and 2904-2941 (KCNA…RGCH). Cystine bridges form between cysteine 2819–cysteine 2831, cysteine 2826–cysteine 2844, cysteine 2838–cysteine 2854, cysteine 2859–cysteine 2871, cysteine 2866–cysteine 2885, cysteine 2879–cysteine 2898, cysteine 2905–cysteine 2918, cysteine 2913–cysteine 2931, cysteine 2925–cysteine 2940, cysteine 2987–cysteine 2997, and cysteine 2993–cysteine 3006. N-linked (GlcNAc...) asparagine glycosylation occurs at asparagine 2906. Residues 2983–3018 (DVDECSTTFPCSQLCINTHGSYKCLCVEGYAPRGGD) form the EGF-like 1; calcium-binding domain. Asparagine 3049 and asparagine 3090 each carry an N-linked (GlcNAc...) asparagine glycan. LDL-receptor class B repeat units follow at residues 3070-3114 (QMIY…DWVG), 3115-3157 (GNLY…DVQN), 3158-3201 (GYLY…DYVT), 3202-3244 (ERIY…FEDY), and 3245-3285 (VYWT…FHAL). HAT repeat units follow at residues 3128 to 3171 (EVSK…HSLI) and 3224 to 3256 (RHVV…KSIN). N-linked (GlcNAc...) asparagine glycans are attached at residues asparagine 3265 and asparagine 3334. 11 LDL-receptor class A domains span residues 3334 to 3371 (NCTA…PDCP), 3374 to 3410 (KCRP…ANCD), 3413 to 3450 (VCLP…RDCP), 3453 to 3491 (TCAP…ANCT), 3494 to 3533 (TCGV…EECD), 3536 to 3572 (TCEP…ESCT), 3575 to 3611 (PCSE…KDCT), 3613 to 3649 (RCDM…EACG), 3654 to 3692 (TCPL…EECT), 3695 to 3733 (QCPP…EDCE), and 3741 to 3778 (HCKD…EDCS). Cystine bridges form between cysteine 3335/cysteine 3347, cysteine 3342/cysteine 3360, cysteine 3354/cysteine 3370, cysteine 3375/cysteine 3387, cysteine 3382/cysteine 3400, cysteine 3394/cysteine 3409, cysteine 3414/cysteine 3427, cysteine 3421/cysteine 3440, cysteine 3434/cysteine 3449, cysteine 3454/cysteine 3467, cysteine 3461/cysteine 3480, cysteine 3474/cysteine 3490, cysteine 3495/cysteine 3508, cysteine 3502/cysteine 3521, cysteine 3515/cysteine 3532, cysteine 3537/cysteine 3549, cysteine 3544/cysteine 3562, cysteine 3556/cysteine 3571, cysteine 3576/cysteine 3588, cysteine 3583/cysteine 3601, cysteine 3595/cysteine 3610, cysteine 3614/cysteine 3626, cysteine 3621/cysteine 3639, cysteine 3633/cysteine 3648, cysteine 3655/cysteine 3667, cysteine 3662/cysteine 3680, cysteine 3674/cysteine 3691, cysteine 3696/cysteine 3710, cysteine 3704/cysteine 3723, cysteine 3717/cysteine 3732, cysteine 3742/cysteine 3755, cysteine 3750/cysteine 3768, and cysteine 3762/cysteine 3777. N-linked (GlcNAc...) asparagine glycosylation is present at asparagine 3489. An N-linked (GlcNAc...) asparagine glycan is attached at asparagine 3663. Residues asparagine 3789 and asparagine 3840 are each glycosylated (N-linked (GlcNAc...) asparagine). An LDL-receptor class B 31 repeat occupies 3913 to 3925 (GRVYWTNWHTGTI). A glycan (N-linked (GlcNAc...) asparagine) is linked at asparagine 3954. LDL-receptor class B repeat units follow at residues 3971-4013 (GNVY…DPLR), 4014-4057 (GTMY…DYHN), and 4058-4102 (ERLY…FEDY). The HAT 10 repeat unit spans residues 3995–4027 (TLISGMIDEPHAIVVDPLRGTMYWSDWGNHPKI). Residues asparagine 4076, asparagine 4126, and asparagine 4180 are each glycosylated (N-linked (GlcNAc...) asparagine). 4 EGF-like domains span residues 4197–4230 (RPGT…YTGD), 4233–4269 (ELDQ…PRCT), 4270–4302 (QQVC…FLGD), and 4305–4341 (QYRQ…TRCE). Disulfide bonds link cysteine 4201–cysteine 4211, cysteine 4205–cysteine 4221, cysteine 4237–cysteine 4247, cysteine 4241–cysteine 4257, cysteine 4259–cysteine 4268, cysteine 4273–cysteine 4283, cysteine 4277–cysteine 4293, cysteine 4309–cysteine 4319, cysteine 4313–cysteine 4329, and cysteine 4331–cysteine 4340. N-linked (GlcNAc...) asparagine glycosylation is present at asparagine 4280. Asparagine 4365 is a glycosylation site (N-linked (GlcNAc...) asparagine). The region spanning 4376–4410 (LTCIDHCSNGGSCTMNSKMMPECQCPPHMTGPRCE) is the EGF-like 6 domain. 3 disulfide bridges follow: cysteine 4378/cysteine 4388, cysteine 4382/cysteine 4398, and cysteine 4400/cysteine 4409. Residues 4425–4445 (ILIPLLLLLLLLLVAGVVFWY) form a helical membrane-spanning segment. The Cytoplasmic segment spans residues 4446 to 4545 (KRRVRGAKGF…PEDEIGDPLA (100 aa)). The segment at 4446–4545 (KRRVRGAKGF…PEDEIGDPLA (100 aa)) is interaction with MAFB. The residue at position 4461 (threonine 4461) is a Phosphothreonine. Tyrosine 4508 carries the post-translational modification Phosphotyrosine. 3 positions are modified to phosphoserine: serine 4518, serine 4521, and serine 4524.

This sequence belongs to the LDLR family. Heterodimer of an 85-kDa membrane-bound carboxyl subunit and a non-covalently attached 515-kDa N-terminal subunit. Intracellular domain interacts with MAFB. Found in a complex with PID1/PCLI1, LRP1 and CUBNI. Interacts with SNX17, PID1/PCLI1, PDGF and CUBN. The intracellular domain interacts with SHC1, GULP1 and DAB1. Can weakly interact (via NPXY motif) with DAB2 (via PID domain); the interaction is enhanced by tyrosine phosphorylation of the NPXY motif. Interacts with MDK; promotes neuronal survival. Interacts with LRPAP1; this interaction is followed by rapid internalization. Interacts with uPA/PLAU and PAI1/SERPINE1, either individually or in complex with each other, leading to rapid endocytosis; this interaction is abolished in the presence of LRPAP1/RAP. Also interacts with tPA/PLAT alone or in complex with SERPINE1. Interacts with the urokinase receptor PLAUR; this interaction leads to PLAUR internalization and is impaired in the presence of SORL1. Interacts with PDGFB. Interacts with TAU/MAPT, leading to endocytosis; this interaction is reduced in the presence of LRPAP1/RAP. Interacts with IGFBP3. Interacts with ADGRG6. Cleaved into a 85 kDa membrane-spanning subunit (LRP-85) and a 515 kDa large extracellular domain (LRP-515) that remains non-covalently associated. Gamma-secretase-dependent cleavage of LRP-85 releases the intracellular domain from the membrane. Post-translationally, phosphorylated on serine and threonine residues. In terms of processing, phosphorylated on tyrosine residues upon stimulation with PDGF. Tyrosine phosphorylation promotes interaction with SHC1.

Its subcellular location is the cell membrane. The protein resides in the membrane. It is found in the coated pit. The protein localises to the golgi outpost. It localises to the cytoplasm. Its subcellular location is the cytoskeleton. The protein resides in the microtubule organizing center. It is found in the nucleus. Endocytic receptor involved in endocytosis and in phagocytosis of apoptotic cells. Required for early embryonic development. Involved in cellular lipid homeostasis. Involved in the plasma clearance of chylomicron remnants and activated LRPAP1 (alpha 2-macroglobulin), as well as the local metabolism of complexes between plasminogen activators and their endogenous inhibitors. Acts as an LRPAP1 alpha-2-macroglobulin receptor. Acts as a TAU/MAPT receptor and controls the endocytosis of TAU/MAPT as well as its subsequent spread. May modulate cellular events, such as APP metabolism, kinase-dependent intracellular signaling, neuronal calcium signaling as well as neurotransmission. Also acts as a receptor for IGFBP3 to mediate cell growth inhibition. In Rattus norvegicus (Rat), this protein is Prolow-density lipoprotein receptor-related protein 1.